Consider the following 696-residue polypeptide: Methionine--tRNA ligase (696 aa).

Residues 12 to 22 (PYANGPLHLGH) carry the 'HIGH' region motif. Cysteine 143, cysteine 146, cysteine 156, and cysteine 159 together coordinate Zn(2+). The 'KMSKS' region motif lies at 330–334 (KMSKS). Lysine 333 provides a ligand contact to ATP. Residues 593 to 696 (DFAKLDLRIG…AGAQPGMPVR (104 aa)) enclose the tRNA-binding domain.

It belongs to the class-I aminoacyl-tRNA synthetase family. MetG type 1 subfamily. As to quaternary structure, homodimer. The cofactor is Zn(2+).

It localises to the cytoplasm. The catalysed reaction is tRNA(Met) + L-methionine + ATP = L-methionyl-tRNA(Met) + AMP + diphosphate. Is required not only for elongation of protein synthesis but also for the initiation of all mRNA translation through initiator tRNA(fMet) aminoacylation. The protein is Methionine--tRNA ligase of Xanthomonas campestris pv. campestris (strain 8004).